The primary structure comprises 291 residues: Acetyl-coenzyme A carboxylase carboxyl transferase subunit beta (291 aa).

The CoA carboxyltransferase N-terminal domain maps to 23 to 291; sequence VWHKCPSCTA…PPDLPVEESV (269 aa). Zn(2+) contacts are provided by C27, C30, C46, and C49. The C4-type zinc-finger motif lies at 27–49; it reads CPSCTAVLYRVELERNLEVCPKC.

It belongs to the AccD/PCCB family. As to quaternary structure, acetyl-CoA carboxylase is a heterohexamer composed of biotin carboxyl carrier protein (AccB), biotin carboxylase (AccC) and two subunits each of ACCase subunit alpha (AccA) and ACCase subunit beta (AccD). Zn(2+) is required as a cofactor.

It localises to the cytoplasm. It carries out the reaction N(6)-carboxybiotinyl-L-lysyl-[protein] + acetyl-CoA = N(6)-biotinyl-L-lysyl-[protein] + malonyl-CoA. It participates in lipid metabolism; malonyl-CoA biosynthesis; malonyl-CoA from acetyl-CoA: step 1/1. In terms of biological role, component of the acetyl coenzyme A carboxylase (ACC) complex. Biotin carboxylase (BC) catalyzes the carboxylation of biotin on its carrier protein (BCCP) and then the CO(2) group is transferred by the transcarboxylase to acetyl-CoA to form malonyl-CoA. This Coxiella burnetii (strain RSA 331 / Henzerling II) protein is Acetyl-coenzyme A carboxylase carboxyl transferase subunit beta.